The sequence spans 348 residues: Pyruvate dehydrogenase E1 component subunit alpha (348 aa).

Residues 1–21 (MAPRKSASVSSRKTAAKPAKK) form a disordered region.

Heterodimer of an alpha and a beta chain. Thiamine diphosphate serves as cofactor.

The enzyme catalyses N(6)-[(R)-lipoyl]-L-lysyl-[protein] + pyruvate + H(+) = N(6)-[(R)-S(8)-acetyldihydrolipoyl]-L-lysyl-[protein] + CO2. In terms of biological role, the pyruvate dehydrogenase complex catalyzes the overall conversion of pyruvate to acetyl-CoA and CO(2). It contains multiple copies of three enzymatic components: pyruvate dehydrogenase (E1), dihydrolipoamide acetyltransferase (E2) and lipoamide dehydrogenase (E3). This is Pyruvate dehydrogenase E1 component subunit alpha (pdhA) from Rhizobium meliloti (strain 1021) (Ensifer meliloti).